Reading from the N-terminus, the 176-residue chain is Translation initiation factor IF-3 (176 aa).

It belongs to the IF-3 family. In terms of assembly, monomer.

It is found in the cytoplasm. In terms of biological role, IF-3 binds to the 30S ribosomal subunit and shifts the equilibrium between 70S ribosomes and their 50S and 30S subunits in favor of the free subunits, thus enhancing the availability of 30S subunits on which protein synthesis initiation begins. This is Translation initiation factor IF-3 from Streptococcus pyogenes serotype M4 (strain MGAS10750).